We begin with the raw amino-acid sequence, 340 residues long: Putative pyridoxal kinase C18.10 (340 aa).

2 residues coordinate substrate: Ser19 and Tyr130. Residues 189–190 and 218–230 each bind ATP; these read TS and QFPSLSGVFTGTG. Asp231 is a substrate binding site.

It belongs to the pyridoxine kinase family. A divalent metal cation serves as cofactor.

It is found in the cytoplasm. The protein localises to the nucleus. It catalyses the reaction pyridoxal + ATP = pyridoxal 5'-phosphate + ADP + H(+). Functionally, required for synthesis of pyridoxal-5-phosphate from vitamin B6. In Schizosaccharomyces pombe (strain 972 / ATCC 24843) (Fission yeast), this protein is Putative pyridoxal kinase C18.10.